A 256-amino-acid chain; its full sequence is Thiazole synthase (256 aa).

The Schiff-base intermediate with DXP role is filled by Lys-95. Residues Gly-156, 182 to 183 (AG), and 204 to 205 (NT) each bind 1-deoxy-D-xylulose 5-phosphate.

This sequence belongs to the ThiG family. As to quaternary structure, homotetramer. Forms heterodimers with either ThiH or ThiS.

It is found in the cytoplasm. It catalyses the reaction [ThiS sulfur-carrier protein]-C-terminal-Gly-aminoethanethioate + 2-iminoacetate + 1-deoxy-D-xylulose 5-phosphate = [ThiS sulfur-carrier protein]-C-terminal Gly-Gly + 2-[(2R,5Z)-2-carboxy-4-methylthiazol-5(2H)-ylidene]ethyl phosphate + 2 H2O + H(+). Its pathway is cofactor biosynthesis; thiamine diphosphate biosynthesis. Catalyzes the rearrangement of 1-deoxy-D-xylulose 5-phosphate (DXP) to produce the thiazole phosphate moiety of thiamine. Sulfur is provided by the thiocarboxylate moiety of the carrier protein ThiS. In vitro, sulfur can be provided by H(2)S. This is Thiazole synthase from Alteromonas mediterranea (strain DSM 17117 / CIP 110805 / LMG 28347 / Deep ecotype).